Reading from the N-terminus, the 294-residue chain is Elongation factor Ts (294 aa).

An involved in Mg(2+) ion dislocation from EF-Tu region spans residues 80–83 (TDFV).

It belongs to the EF-Ts family.

The protein resides in the cytoplasm. In terms of biological role, associates with the EF-Tu.GDP complex and induces the exchange of GDP to GTP. It remains bound to the aminoacyl-tRNA.EF-Tu.GTP complex up to the GTP hydrolysis stage on the ribosome. This chain is Elongation factor Ts, found in Polynucleobacter necessarius subsp. necessarius (strain STIR1).